The primary structure comprises 431 residues: Ribonuclease TTHA0252 (431 aa).

Residues His-59, His-61, Asp-63, His-64, His-141, Asp-162, and His-400 each contribute to the Zn(2+) site.

Belongs to the metallo-beta-lactamase superfamily. RNA-metabolizing metallo-beta-lactamase-like family. As to quaternary structure, monomer. Zn(2+) serves as cofactor.

The protein localises to the cytoplasm. Inhibited by cadmium, cobalt, manganese, magnesium, calcium and nickel ions. Its function is as follows. Has endoribonuclease activity towards 23S and 16S rRNA (in vitro). The polypeptide is Ribonuclease TTHA0252 (Thermus thermophilus (strain ATCC 27634 / DSM 579 / HB8)).